The following is a 781-amino-acid chain: Cation channel sperm-associated auxiliary subunit delta (781 aa).

The signal sequence occupies residues 1-20 (MLVLMLVVATTFRLCPLVKA). Over 21 to 725 (RPLCRIRTLR…YGAFPLSIFP (705 aa)) the chain is Extracellular. Disulfide bonds link Cys24–Cys370, Cys60–Cys146, Cys145–Cys153, Cys388–Cys497, Cys511–Cys705, Cys526–Cys573, and Cys625–Cys655. Asn231, Asn294, Asn458, Asn473, Asn539, and Asn631 each carry an N-linked (GlcNAc...) asparagine glycan. Residues 726-749 (PEITIVLLTAATLLSIWLAYMIPQ) traverse the membrane as a helical segment. Over 750-781 (LLHTEQGLEGNGFWVRLYQRCRKSCACLWGRC) the chain is Cytoplasmic.

It belongs to the CATSPERD family. As to quaternary structure, component of the CatSper complex or CatSpermasome composed of the core pore-forming members CATSPER1, CATSPER2, CATSPER3 and CATSPER4 as well as auxiliary members CATSPERB, CATSPERG, CATSPERD, CATSPERE, CATSPERZ, C2CD6/CATSPERT, TMEM249, TMEM262 and EFCAB9. HSPA1 may be an additional auxiliary complex member. The core complex members CATSPER1, CATSPER2, CATSPER3 and CATSPER4 form a heterotetrameric channel. The auxiliary CATSPERB, CATSPERG, CATSPERD and CATSPERE subunits form a pavilion-like structure over the pore which stabilizes the complex through interactions with CATSPER4, CATSPER3, CATSPER1 and CATSPER2 respectively. TMEM262/CATSPERH interacts with CATSPERB, further stabilizing the complex. C2CD6/CATSPERT interacts at least with CATSPERD and is required for targeting the CatSper complex in the flagellar membrane.

It is found in the cell projection. It localises to the cilium. The protein resides in the flagellum membrane. Its function is as follows. Auxiliary component of the CatSper complex, a complex involved in sperm cell hyperactivation. Sperm cell hyperactivation is needed for sperm motility which is essential late in the preparation of sperm for fertilization. Required for CATSPER1 stability before intraflagellar transport and/or incorporation of the CatSper complex channel into the flagellar membrane. The polypeptide is Cation channel sperm-associated auxiliary subunit delta (Bos taurus (Bovine)).